Reading from the N-terminus, the 335-residue chain is Protein-arginine kinase (335 aa).

The 224-residue stretch at 21–244 (IVMSSRIRLA…NQIIHDEKQI (224 aa)) folds into the Phosphagen kinase C-terminal domain. Residues 24–28 (SSRIR), His-82, Arg-115, 166–170 (RASVM), and 197–202 (RGIYGE) contribute to the ATP site.

It belongs to the ATP:guanido phosphotransferase family.

The catalysed reaction is L-arginyl-[protein] + ATP = N(omega)-phospho-L-arginyl-[protein] + ADP + H(+). Its function is as follows. Catalyzes the specific phosphorylation of arginine residues in proteins. The protein is Protein-arginine kinase of Staphylococcus aureus (strain Mu3 / ATCC 700698).